Here is a 446-residue protein sequence, read N- to C-terminus: Tubulin beta chain (446 aa).

Glutamine 11, glutamate 69, serine 138, glycine 142, threonine 143, glycine 144, asparagine 204, and asparagine 226 together coordinate GTP. Residue glutamate 69 coordinates Mg(2+). Residues 427–446 (EAGVDEGEEFEEEEDFGDEQ) form a disordered region. The segment covering 429-446 (GVDEGEEFEEEEDFGDEQ) has biased composition (acidic residues).

Belongs to the tubulin family. Dimer of alpha and beta chains. A typical microtubule is a hollow water-filled tube with an outer diameter of 25 nm and an inner diameter of 15 nM. Alpha-beta heterodimers associate head-to-tail to form protofilaments running lengthwise along the microtubule wall with the beta-tubulin subunit facing the microtubule plus end conferring a structural polarity. Microtubules usually have 13 protofilaments but different protofilament numbers can be found in some organisms and specialized cells. The cofactor is Mg(2+).

It localises to the cytoplasm. The protein localises to the cytoskeleton. In terms of biological role, tubulin is the major constituent of microtubules, a cylinder consisting of laterally associated linear protofilaments composed of alpha- and beta-tubulin heterodimers. Microtubules grow by the addition of GTP-tubulin dimers to the microtubule end, where a stabilizing cap forms. Below the cap, tubulin dimers are in GDP-bound state, owing to GTPase activity of alpha-tubulin. In Giardia intestinalis (Giardia lamblia), this protein is Tubulin beta chain.